The primary structure comprises 435 residues: Xylose isomerase (435 aa).

Asp-306 and Asp-308 together coordinate Mg(2+).

Belongs to the xylose isomerase family. In terms of assembly, homotetramer. The cofactor is Mg(2+).

Its subcellular location is the cytoplasm. The catalysed reaction is alpha-D-xylose = alpha-D-xylulofuranose. This Brucella melitensis biotype 2 (strain ATCC 23457) protein is Xylose isomerase.